A 360-amino-acid polypeptide reads, in one-letter code: WAT1-related protein At3g28070 (360 aa).

10 helical membrane passes run 15–35 (AVFL…STLF), 45–65 (IYPF…PSLF), 84–104 (IGLL…GIEY), 108–128 (TLAS…AIIF), 140–160 (SLAK…VIFY), 190–210 (WLIG…SFIL), 224–244 (VSFL…LVVE), 248–268 (PSVW…MAIV), 286–306 (LYLA…GAIF), and 311–331 (LYLG…AVMW). The EamA domain maps to 30 to 158 (GISTLFKFAT…LSLIGALVVI (129 aa)).

The protein belongs to the drug/metabolite transporter (DMT) superfamily. Plant drug/metabolite exporter (P-DME) (TC 2.A.7.4) family.

The protein localises to the membrane. The sequence is that of WAT1-related protein At3g28070 from Arabidopsis thaliana (Mouse-ear cress).